Reading from the N-terminus, the 226-residue chain is Staphylococcal superantigen-like 1 (226 aa).

A signal peptide spans 1-30; the sequence is MKFKAIAKASLALGMLATGVITSNVQSVQA.

This sequence belongs to the staphylococcal/streptococcal toxin family. Homodimer.

It is found in the secreted. Mediates virulence by proteolytically cleaving host proteins, including collagens types I and IV as well as human cytokines IL8, IL17A, and IFN-gamma. This is Staphylococcal superantigen-like 1 from Staphylococcus aureus (strain NCTC 8325 / PS 47).